The chain runs to 258 residues: Protein T1 (258 aa).

An N-terminal signal peptide occupies residues 1-17; the sequence is MRRLCIILLVYVYATFA. 3 N-linked (GlcNAc...) asparagine; by host glycosylation sites follow: Asn67, Asn151, and Asn172.

Belongs to the poxviruses A41 family.

The polypeptide is Protein T1 (Rabbit fibroma virus (strain Kasza) (RFV)).